The following is a 242-amino-acid chain: Phosphomannomutase 2 (242 aa).

D8 serves as the catalytic Nucleophile. Mg(2+)-binding residues include D8 and D10. D10 functions as the Proton donor/acceptor in the catalytic mechanism. R17, R119, R130, and R137 together coordinate alpha-D-mannose 1-phosphate. The residue at position 145 (K145) is an N6-acetyllysine. Residues S175 and D177 each contribute to the alpha-D-mannose 1-phosphate site. Residues D205, F217, D219, and T222 each coordinate Mg(2+).

The protein belongs to the eukaryotic PMM family. In terms of assembly, homodimer.

It is found in the cytoplasm. It carries out the reaction alpha-D-mannose 1-phosphate = D-mannose 6-phosphate. The protein operates within nucleotide-sugar biosynthesis; GDP-alpha-D-mannose biosynthesis; alpha-D-mannose 1-phosphate from D-fructose 6-phosphate: step 2/2. Involved in the synthesis of the GDP-mannose and dolichol-phosphate-mannose required for a number of critical mannosyl transfer reactions. In Mus musculus (Mouse), this protein is Phosphomannomutase 2 (Pmm2).